The primary structure comprises 184 residues: Ribosome maturation factor RimM (184 aa).

Residues 111-184 form the PRC barrel domain; sequence DDEFYWVDLI…HIVVDWGLDY (74 aa).

Belongs to the RimM family. Binds ribosomal protein uS19.

Its subcellular location is the cytoplasm. Its function is as follows. An accessory protein needed during the final step in the assembly of 30S ribosomal subunit, possibly for assembly of the head region. Essential for efficient processing of 16S rRNA. May be needed both before and after RbfA during the maturation of 16S rRNA. It has affinity for free ribosomal 30S subunits but not for 70S ribosomes. The polypeptide is Ribosome maturation factor RimM (Ralstonia nicotianae (strain ATCC BAA-1114 / GMI1000) (Ralstonia solanacearum)).